A 104-amino-acid chain; its full sequence is N(2)-fixation sustaining protein CowN (104 aa).

This sequence belongs to the CowN family.

In terms of biological role, is required to sustain N(2)-dependent growth in the presence of low levels of carbon monoxide (CO). Probably acts by protecting the N(2) fixation ability of the nitrogenase complex, which is inactivated in the presence of CO. This chain is N(2)-fixation sustaining protein CowN, found in Arcobacter nitrofigilis (strain ATCC 33309 / DSM 7299 / CCUG 15893 / LMG 7604 / NCTC 12251 / CI) (Campylobacter nitrofigilis).